A 110-amino-acid polypeptide reads, in one-letter code: Competence pilus inhibition repressor (110 aa).

The HTH cro/C1-type domain maps to 7–61; that stretch reads VRFLRKRQGWTQQQLADFSHTSKSNISNLENGNQGYSPAILEYLAKAFNCSVSQI. The segment at residues 18–37 is a DNA-binding region (H-T-H motif); it reads QQQLADFSHTSKSNISNLEN.

Its function is as follows. Represses transcription of the PilB-specific inhibitory protein CpiA. The polypeptide is Competence pilus inhibition repressor (Acinetobacter baylyi (strain ATCC 33305 / BD413 / ADP1)).